A 162-amino-acid chain; its full sequence is MQEISIKFKLTNEEINAIENQKKYYEDFRAISIEALKIVQKKRGWVSDQAIYAIAEILHINPSDVEGVATFYSQIFRKPVGRNIIRYCDSVVCFLTGYKRIQIALENYLKIKIGETTKDDRFTLLPVCCLGNCDKGPTIMINEDTYSVLTPESIPSLLESYK.

4 residues coordinate [2Fe-2S] cluster: C88, C93, C129, and C133.

This sequence belongs to the complex I 24 kDa subunit family. Composed of 13 different subunits. Subunits NuoCD, E, F, and G constitute the peripheral sector of the complex. Requires [2Fe-2S] cluster as cofactor.

The catalysed reaction is a quinone + NADH + 5 H(+)(in) = a quinol + NAD(+) + 4 H(+)(out). Functionally, NDH-1 shuttles electrons from NADH, via FMN and iron-sulfur (Fe-S) centers, to quinones in the respiratory chain. Couples the redox reaction to proton translocation (for every two electrons transferred, four hydrogen ions are translocated across the cytoplasmic membrane), and thus conserves the redox energy in a proton gradient. This Buchnera aphidicola subsp. Acyrthosiphon pisum (strain APS) (Acyrthosiphon pisum symbiotic bacterium) protein is NADH-quinone oxidoreductase subunit E (nuoE).